The chain runs to 129 residues: Small ribosomal subunit protein uS8my (129 aa).

This sequence belongs to the universal ribosomal protein uS8 family. Component of the mitochondrial ribosome small subunit.

It is found in the mitochondrion. This chain is Small ribosomal subunit protein uS8my (RPS15AE), found in Arabidopsis thaliana (Mouse-ear cress).